We begin with the raw amino-acid sequence, 63 residues long: uncharacterized protein (63 aa).

A helical transmembrane segment spans residues 3 to 23 (IIYIILGFLSLAIGIIGIFPS).

It localises to the membrane. This is an uncharacterized protein from Haemophilus influenzae (strain ATCC 51907 / DSM 11121 / KW20 / Rd).